Consider the following 1109-residue polypeptide: Zinc finger E-box-binding homeobox 1 (1109 aa).

2 disordered regions span residues 1-106 (MADG…DPNV) and 123-143 (PEED…NGTP). A compositionally biased stretch (low complexity) spans 15–30 (PRRNNVTNYNTVVEAN). Residues Ser-31 and Ser-33 each carry the phosphoserine modification. The span at 87–98 (VKDDECDSDAEN) shows a compositional bias: acidic residues. The segment at 150-173 (LTCPYCDRGYKRFTSLKEHIKYRH) adopts a C2H2-type 1 zinc-finger fold. Residues Lys-166 and Lys-175 each participate in a glycyl lysine isopeptide (Lys-Gly) (interchain with G-Cter in SUMO2) cross-link. C2H2-type zinc fingers lie at residues 180–202 (FSCS…MTSH) and 220–242 (FKCT…LRIH). The C2H2-type 4; atypical zinc finger occupies 248–272 (YECPNCKKRFSHSGSYSSHISSKKC). The tract at residues 278-307 (VNGRPRSGLKTSQCSSPSLSTSPGSPTRPQ) is disordered. Lys-287 is covalently cross-linked (Glycyl lysine isopeptide (Lys-Gly) (interchain with G-Cter in SUMO2)). Positions 288–304 (TSQCSSPSLSTSPGSPT) are enriched in low complexity. Phosphoserine occurs at positions 293 and 302. Glycyl lysine isopeptide (Lys-Gly) (interchain with G-Cter in SUMO2) cross-links involve residues Lys-311 and Lys-315. Lys-327 participates in a covalent cross-link: Glycyl lysine isopeptide (Lys-Gly) (interchain with G-Cter in SUMO); alternate. Residue Lys-327 forms a Glycyl lysine isopeptide (Lys-Gly) (interchain with G-Cter in SUMO2); alternate linkage. Residues Lys-419, Lys-473, Lys-484, Lys-495, and Lys-528 each participate in a glycyl lysine isopeptide (Lys-Gly) (interchain with G-Cter in SUMO2) cross-link. 3 disordered regions span residues 468-501 (VPQN…KDKS), 525-566 (PELK…SQPP), and 614-711 (QIPG…PQVE). Positions 483–501 (CKSEKSPEDLTVKSEKDKS) are enriched in basic and acidic residues. The homeobox; atypical DNA-binding region spans 559-618 (DLSPSQPPLKNLLSLLKAYYALNAQPSTEELTKIADSVNLPLDVVKKWFEKMQAGQIPGQ). The span at 654 to 665 (RGQSPLKMTSSP) shows a compositional bias: polar residues. 4 positions are modified to phosphoserine: Ser-657, Ser-664, Ser-671, and Ser-678. Over residues 673-703 (INGSRSCTSSPSPLNLSSARNPQGYSCVSEG) the composition is skewed to polar residues. A Phosphothreonine modification is found at Thr-680. Position 682 is a phosphoserine (Ser-682). A Glycyl lysine isopeptide (Lys-Gly) (interchain with G-Cter in SUMO); alternate cross-link involves residue Lys-752. A Glycyl lysine isopeptide (Lys-Gly) (interchain with G-Cter in SUMO2); alternate cross-link involves residue Lys-752. Residues 834–873 (PPVKVIQPNGNQDERQDTSSEGVSVEDQNDSDCTPPKKKT) form a disordered region. 2 consecutive C2H2-type zinc fingers follow at residues 881 to 903 (YACD…KYEH) and 909 to 931 (HECG…MRLH). A C2H2-type 7; atypical zinc finger spans residues 937-958 (YQCDKCGKRFSHSGSYSQHMNH). Residues 968 to 1109 (EDRDAMEQED…RLSEEKTNEA (142 aa)) form a disordered region. The segment covering 1012 to 1066 (EEDEDSEKEEEEEDKEMEELQEDKECENPQEEEEEEEEEEEEEEEEEEEEAEEAE) has biased composition (acidic residues). Residues 1071 to 1087 (AAKTGGAVEEEAAQQAG) are compositionally biased toward low complexity. The span at 1097-1109 (ESKRLSEEKTNEA) shows a compositional bias: basic and acidic residues.

This sequence belongs to the delta-EF1/ZFH-1 C2H2-type zinc-finger family. As to quaternary structure, interacts (via N-terminus) with SMARCA4/BRG1. Ubiquitinated, leading to degradation in a proteasome-dependent manner. Deubiquitinated by USP51, leading to stabilization.

The protein localises to the nucleus. In terms of biological role, acts as a transcriptional repressor. Binds to E-box sequences in the immunoglobulin heavy chain enhancer as well as in the regulatory regions of many other tissue-specific genes. Represses E-cadherin promoter and induces an epithelial-mesenchymal transition (EMT) by recruiting SMARCA4/BRG1. Represses BCL6 transcription in the presence of the corepressor CTBP1. Positively regulates neuronal differentiation. Represses RCOR1 transcription activation during neurogenesis. Represses transcription by binding to the E box (5'-CANNTG-3'). In the absence of TGFB1, acts as a repressor of COL1A2 transcription via binding to the E-box in the upstream enhancer region. This Rattus norvegicus (Rat) protein is Zinc finger E-box-binding homeobox 1.